The primary structure comprises 398 residues: Phosphoglycerate kinase (398 aa).

Substrate is bound by residues 21-23 (DFN), R36, 59-62 (HLGR), R119, and R157. ATP is bound by residues K208, G296, E327, and 354-357 (GGDS).

Belongs to the phosphoglycerate kinase family. In terms of assembly, monomer.

Its subcellular location is the cytoplasm. The catalysed reaction is (2R)-3-phosphoglycerate + ATP = (2R)-3-phospho-glyceroyl phosphate + ADP. It functions in the pathway carbohydrate degradation; glycolysis; pyruvate from D-glyceraldehyde 3-phosphate: step 2/5. The sequence is that of Phosphoglycerate kinase from Streptococcus agalactiae serotype III (strain NEM316).